Reading from the N-terminus, the 287-residue chain is Pantothenate synthetase (287 aa).

ATP is bound at residue 30–37 (MGALHEGH). The active-site Proton donor is the H37. Q61 is a (R)-pantoate binding site. Q61 lines the beta-alanine pocket. 147-150 (GEKD) is a binding site for ATP. Q153 lines the (R)-pantoate pocket. 184–187 (MSSR) is a binding site for ATP.

The protein belongs to the pantothenate synthetase family. As to quaternary structure, homodimer.

The protein resides in the cytoplasm. It carries out the reaction (R)-pantoate + beta-alanine + ATP = (R)-pantothenate + AMP + diphosphate + H(+). Its pathway is cofactor biosynthesis; (R)-pantothenate biosynthesis; (R)-pantothenate from (R)-pantoate and beta-alanine: step 1/1. Functionally, catalyzes the condensation of pantoate with beta-alanine in an ATP-dependent reaction via a pantoyl-adenylate intermediate. In Granulibacter bethesdensis (strain ATCC BAA-1260 / CGDNIH1), this protein is Pantothenate synthetase.